A 370-amino-acid chain; its full sequence is Histidinol-phosphate aminotransferase 1 (370 aa).

K222 bears the N6-(pyridoxal phosphate)lysine mark.

It belongs to the class-II pyridoxal-phosphate-dependent aminotransferase family. Histidinol-phosphate aminotransferase subfamily. As to quaternary structure, homodimer. The cofactor is pyridoxal 5'-phosphate.

The catalysed reaction is L-histidinol phosphate + 2-oxoglutarate = 3-(imidazol-4-yl)-2-oxopropyl phosphate + L-glutamate. It participates in amino-acid biosynthesis; L-histidine biosynthesis; L-histidine from 5-phospho-alpha-D-ribose 1-diphosphate: step 7/9. This is Histidinol-phosphate aminotransferase 1 from Bacillus cereus (strain ATCC 10987 / NRS 248).